Here is a 365-residue protein sequence, read N- to C-terminus: Phosphoserine aminotransferase (365 aa).

R42 serves as a coordination point for L-glutamate. Residues 76–77 (GR), W102, T156, D175, and Q198 contribute to the pyridoxal 5'-phosphate site. K199 is modified (N6-(pyridoxal phosphate)lysine). Residue 240–241 (NT) coordinates pyridoxal 5'-phosphate.

It belongs to the class-V pyridoxal-phosphate-dependent aminotransferase family. SerC subfamily. As to quaternary structure, homodimer. Pyridoxal 5'-phosphate is required as a cofactor.

It is found in the cytoplasm. The catalysed reaction is O-phospho-L-serine + 2-oxoglutarate = 3-phosphooxypyruvate + L-glutamate. It carries out the reaction 4-(phosphooxy)-L-threonine + 2-oxoglutarate = (R)-3-hydroxy-2-oxo-4-phosphooxybutanoate + L-glutamate. It participates in amino-acid biosynthesis; L-serine biosynthesis; L-serine from 3-phospho-D-glycerate: step 2/3. Its pathway is cofactor biosynthesis; pyridoxine 5'-phosphate biosynthesis; pyridoxine 5'-phosphate from D-erythrose 4-phosphate: step 3/5. Catalyzes the reversible conversion of 3-phosphohydroxypyruvate to phosphoserine and of 3-hydroxy-2-oxo-4-phosphonooxybutanoate to phosphohydroxythreonine. In Shewanella oneidensis (strain ATCC 700550 / JCM 31522 / CIP 106686 / LMG 19005 / NCIMB 14063 / MR-1), this protein is Phosphoserine aminotransferase.